We begin with the raw amino-acid sequence, 115 residues long: Holo-[acyl-carrier-protein] synthase (115 aa).

2 residues coordinate Mg(2+): Asp8 and Glu50.

This sequence belongs to the P-Pant transferase superfamily. AcpS family. Mg(2+) is required as a cofactor.

Its subcellular location is the cytoplasm. It carries out the reaction apo-[ACP] + CoA = holo-[ACP] + adenosine 3',5'-bisphosphate + H(+). Functionally, transfers the 4'-phosphopantetheine moiety from coenzyme A to a Ser of acyl-carrier-protein. This chain is Holo-[acyl-carrier-protein] synthase, found in Renibacterium salmoninarum (strain ATCC 33209 / DSM 20767 / JCM 11484 / NBRC 15589 / NCIMB 2235).